A 431-amino-acid polypeptide reads, in one-letter code: Glutamate-1-semialdehyde 2,1-aminomutase (431 aa).

Lys265 bears the N6-(pyridoxal phosphate)lysine mark.

It belongs to the class-III pyridoxal-phosphate-dependent aminotransferase family. HemL subfamily. Homodimer. The cofactor is pyridoxal 5'-phosphate.

The protein resides in the cytoplasm. It carries out the reaction (S)-4-amino-5-oxopentanoate = 5-aminolevulinate. The protein operates within porphyrin-containing compound metabolism; protoporphyrin-IX biosynthesis; 5-aminolevulinate from L-glutamyl-tRNA(Glu): step 2/2. The chain is Glutamate-1-semialdehyde 2,1-aminomutase from Aliivibrio fischeri (strain ATCC 700601 / ES114) (Vibrio fischeri).